A 308-amino-acid chain; its full sequence is Phosphoribosylaminoimidazole-succinocarboxamide synthase (308 aa).

It belongs to the SAICAR synthetase family.

It carries out the reaction 5-amino-1-(5-phospho-D-ribosyl)imidazole-4-carboxylate + L-aspartate + ATP = (2S)-2-[5-amino-1-(5-phospho-beta-D-ribosyl)imidazole-4-carboxamido]succinate + ADP + phosphate + 2 H(+). Its pathway is purine metabolism; IMP biosynthesis via de novo pathway; 5-amino-1-(5-phospho-D-ribosyl)imidazole-4-carboxamide from 5-amino-1-(5-phospho-D-ribosyl)imidazole-4-carboxylate: step 1/2. In Xylella fastidiosa (strain 9a5c), this protein is Phosphoribosylaminoimidazole-succinocarboxamide synthase.